A 258-amino-acid chain; its full sequence is MVLIRVLANLLVLQLSYAQKSSELVVGGHPCNIYEHHFLAFMYNSSGFMCSGTLINQQWVLSAAHCDMENMHIYLGLHSFKLPNKDQKKRVAKEKFFCLSSKSYTKWDKDIMLIKLNKPVTYSTHIASLSLPSNPPRVGSVCRIMGWGSITSPKKILPFVPHCANINIVPYTVCRVIYRPLPEQSRTLCAGVSGRRIGSCLGDSGGPLICNGQIQGIVSWGSDPCVNRGAPSIYTKVFDYTDWIHSIIAGNTAATCPS.

The N-terminal stretch at 1 to 18 (MVLIRVLANLLVLQLSYA) is a signal peptide. Residues 19–24 (QKSSEL) constitute a propeptide that is removed on maturation. The Peptidase S1 domain occupies 25–249 (VVGGHPCNIY…YTDWIHSIIA (225 aa)). Intrachain disulfides connect Cys31–Cys163, Cys50–Cys66, Cys98–Cys256, Cys142–Cys210, Cys174–Cys189, and Cys200–Cys225. N-linked (GlcNAc...) asparagine glycosylation is present at Asn44. Catalysis depends on charge relay system residues His65 and Asp110. Ser204 acts as the Charge relay system in catalysis.

The protein belongs to the peptidase S1 family. Snake venom subfamily. In terms of assembly, monomer. In terms of tissue distribution, expressed by the venom gland.

It localises to the secreted. Degrades alpha chain of fibrinogen (FGA), and has strong caseinolytic activity. Cleaves oxidized insulin B-chain at '40-Tyr-|-Leu-41', '48-Phe-|-Phe-49' and '49-Phe-|-Tyr-50', and glucagon at the bonds '62-Tyr-|-Ser-63', 66-Leu-|-Asp-67' and '78-Leu-|-Met-79' bonds. The sequence is that of Alpha-fibrinogenase-like from Daboia siamensis (Eastern Russel's viper).